A 125-amino-acid chain; its full sequence is Ribosome-binding factor A (125 aa).

This sequence belongs to the RbfA family. As to quaternary structure, monomer. Binds 30S ribosomal subunits, but not 50S ribosomal subunits or 70S ribosomes.

The protein localises to the cytoplasm. Its function is as follows. One of several proteins that assist in the late maturation steps of the functional core of the 30S ribosomal subunit. Associates with free 30S ribosomal subunits (but not with 30S subunits that are part of 70S ribosomes or polysomes). Required for efficient processing of 16S rRNA. May interact with the 5'-terminal helix region of 16S rRNA. The polypeptide is Ribosome-binding factor A (Fervidobacterium nodosum (strain ATCC 35602 / DSM 5306 / Rt17-B1)).